The chain runs to 300 residues: GTPase Era (300 aa).

Residues 7–182 enclose the Era-type G domain; sequence YCGFIAIVGR…LRKGVHHFPE (176 aa). Positions 15 to 22 are G1; that stretch reads GRPNVGKS. A GTP-binding site is contributed by 15–22; the sequence is GRPNVGKS. The tract at residues 41–45 is G2; the sequence is QTTRH. The tract at residues 62 to 65 is G3; that stretch reads DTPG. GTP-binding positions include 62–66 and 124–127; these read DTPGL and NKVD. Residues 124–127 form a G4 region; that stretch reads NKVD. The interval 154 to 156 is G5; sequence ISA. A KH type-2 domain is found at 206–283; that stretch reads TGEELPYSVT…HLELWVKVKS (78 aa).

The protein belongs to the TRAFAC class TrmE-Era-EngA-EngB-Septin-like GTPase superfamily. Era GTPase family. Monomer.

It localises to the cytoplasm. The protein resides in the cell inner membrane. Its function is as follows. An essential GTPase that binds both GDP and GTP, with rapid nucleotide exchange. Plays a role in 16S rRNA processing and 30S ribosomal subunit biogenesis and possibly also in cell cycle regulation and energy metabolism. The protein is GTPase Era of Histophilus somni (strain 129Pt) (Haemophilus somnus).